The chain runs to 123 residues: Large-conductance mechanosensitive channel (123 aa).

Transmembrane regions (helical) follow at residues 14–34 and 67–87; these read VIDM…VKSL and GSFL…FLMV.

It belongs to the MscL family. As to quaternary structure, homopentamer.

Its subcellular location is the cell membrane. Channel that opens in response to stretch forces in the membrane lipid bilayer. May participate in the regulation of osmotic pressure changes within the cell. This chain is Large-conductance mechanosensitive channel, found in Limosilactobacillus reuteri (strain DSM 20016) (Lactobacillus reuteri).